The primary structure comprises 201 residues: Recombination protein RecR (201 aa).

The segment at 60-75 (CKTCGNIDTQNPCTVC) adopts a C4-type zinc-finger fold. The 96-residue stretch at 83 to 178 (AIIVVVADVA…KVTRLAHGVP (96 aa)) folds into the Toprim domain.

This sequence belongs to the RecR family.

In terms of biological role, may play a role in DNA repair. It seems to be involved in an RecBC-independent recombinational process of DNA repair. It may act with RecF and RecO. The protein is Recombination protein RecR of Rhodopseudomonas palustris (strain BisA53).